We begin with the raw amino-acid sequence, 212 residues long: Phosphoenolpyruvate guanylyltransferase (212 aa).

Residues T139, G155, and S158 each contribute to the phosphoenolpyruvate site.

It belongs to the CofC family.

The enzyme catalyses phosphoenolpyruvate + GTP + H(+) = enolpyruvoyl-2-diphospho-5'-guanosine + diphosphate. It functions in the pathway cofactor biosynthesis; coenzyme F420 biosynthesis. Functionally, guanylyltransferase that catalyzes the activation of phosphoenolpyruvate (PEP) as enolpyruvoyl-2-diphospho-5'-guanosine, via the condensation of PEP with GTP. It is involved in the biosynthesis of coenzyme F420, a hydride carrier cofactor. The protein is Phosphoenolpyruvate guanylyltransferase of Streptomyces coelicolor (strain ATCC BAA-471 / A3(2) / M145).